A 389-amino-acid chain; its full sequence is Chalcone synthase 3 (389 aa).

Cysteine 164 is a catalytic residue.

It belongs to the thiolase-like superfamily. Chalcone/stilbene synthases family.

The enzyme catalyses (E)-4-coumaroyl-CoA + 3 malonyl-CoA + 3 H(+) = 2',4,4',6'-tetrahydroxychalcone + 3 CO2 + 4 CoA. Its pathway is secondary metabolite biosynthesis; flavonoid biosynthesis. Its function is as follows. The primary product of this enzyme is 4,2',4',6'-tetrahydroxychalcone (also termed naringenin-chalcone or chalcone) which can under specific conditions spontaneously isomerize into naringenin. This Trifolium subterraneum (Subterranean clover) protein is Chalcone synthase 3 (CHS3).